A 598-amino-acid polypeptide reads, in one-letter code: Aspartate--tRNA(Asp/Asn) ligase (598 aa).

Residue glutamate 177 participates in L-aspartate binding. The interval 201-204 (QLFK) is aspartate. Arginine 223 provides a ligand contact to L-aspartate. ATP contacts are provided by residues 223-225 (RDE) and glutamine 232. An L-aspartate-binding site is contributed by histidine 456. Glutamate 493 lines the ATP pocket. Position 500 (arginine 500) interacts with L-aspartate. Position 545-548 (545-548 (GLDR)) interacts with ATP.

It belongs to the class-II aminoacyl-tRNA synthetase family. Type 1 subfamily. Homodimer.

The protein resides in the cytoplasm. The catalysed reaction is tRNA(Asx) + L-aspartate + ATP = L-aspartyl-tRNA(Asx) + AMP + diphosphate. In terms of biological role, aspartyl-tRNA synthetase with relaxed tRNA specificity since it is able to aspartylate not only its cognate tRNA(Asp) but also tRNA(Asn). Reaction proceeds in two steps: L-aspartate is first activated by ATP to form Asp-AMP and then transferred to the acceptor end of tRNA(Asp/Asn). This is Aspartate--tRNA(Asp/Asn) ligase from Prochlorococcus marinus (strain AS9601).